We begin with the raw amino-acid sequence, 325 residues long: Tetraacyldisaccharide 4'-kinase (325 aa).

Position 54-61 (54-61 (SVGGTGKT)) interacts with ATP.

Belongs to the LpxK family.

It carries out the reaction a lipid A disaccharide + ATP = a lipid IVA + ADP + H(+). It participates in glycolipid biosynthesis; lipid IV(A) biosynthesis; lipid IV(A) from (3R)-3-hydroxytetradecanoyl-[acyl-carrier-protein] and UDP-N-acetyl-alpha-D-glucosamine: step 6/6. In terms of biological role, transfers the gamma-phosphate of ATP to the 4'-position of a tetraacyldisaccharide 1-phosphate intermediate (termed DS-1-P) to form tetraacyldisaccharide 1,4'-bis-phosphate (lipid IVA). The chain is Tetraacyldisaccharide 4'-kinase from Rickettsia akari (strain Hartford).